The chain runs to 346 residues: UDP-3-O-acylglucosamine N-acyltransferase (346 aa).

His-253 acts as the Proton acceptor in catalysis.

This sequence belongs to the transferase hexapeptide repeat family. LpxD subfamily. Homotrimer.

It carries out the reaction a UDP-3-O-[(3R)-3-hydroxyacyl]-alpha-D-glucosamine + a (3R)-hydroxyacyl-[ACP] = a UDP-2-N,3-O-bis[(3R)-3-hydroxyacyl]-alpha-D-glucosamine + holo-[ACP] + H(+). The protein operates within bacterial outer membrane biogenesis; LPS lipid A biosynthesis. In terms of biological role, catalyzes the N-acylation of UDP-3-O-acylglucosamine using 3-hydroxyacyl-ACP as the acyl donor. Is involved in the biosynthesis of lipid A, a phosphorylated glycolipid that anchors the lipopolysaccharide to the outer membrane of the cell. The protein is UDP-3-O-acylglucosamine N-acyltransferase of Rickettsia conorii (strain ATCC VR-613 / Malish 7).